Consider the following 50-residue polypeptide: Small, acid-soluble spore protein P (50 aa).

A disordered region spans residues 1–50 (MSKRKMGPKQQKNPELPKSPEQPYGEPLSGSKKEKKANHSGQKHNPHHGL). Residues 33–50 (KEKKANHSGQKHNPHHGL) are compositionally biased toward basic residues.

This sequence belongs to the SspP family.

It is found in the spore core. The protein is Small, acid-soluble spore protein P of Oceanobacillus iheyensis (strain DSM 14371 / CIP 107618 / JCM 11309 / KCTC 3954 / HTE831).